Here is a 120-residue protein sequence, read N- to C-terminus: U13-lycotoxin-Ls1f (120 aa).

The first 16 residues, 1 to 16 (MKILFVLISILYAVYC), serve as a signal peptide directing secretion. Residues 17–54 (FSSEEDVDSAYLANELEPVEDINSEQYAALEPKEEQER) constitute a propeptide that is removed on maturation. Cystine bridges form between C56–C70, C63–C76, C69–C87, and C78–C85. Positions 56–95 (CAGMGQDCKDDCDCCLNIATCNCWFGRYFCSCTFGDYQTC) constitute an Agouti domain.

This sequence belongs to the neurotoxin 05 (agouti) family. Post-translationally, contains 6 disulfide bonds. As to expression, expressed by the venom gland.

Its subcellular location is the secreted. The sequence is that of U13-lycotoxin-Ls1f from Lycosa singoriensis (Wolf spider).